Consider the following 873-residue polypeptide: Potassium voltage-gated channel subfamily KQT member 3 (873 aa).

Residues 1–41 form a disordered region; the sequence is MGLKARRAAGAAGGGGGEGGGGGGGAANPAGGDSAVAGDEE. At 1–121 the chain is on the cytoplasmic side; the sequence is MGLKARRAAG…IYDALERPRG (121 aa). Residues 11–26 show a composition bias toward gly residues; sequence AAGGGGGEGGGGGGGA. T82 is subject to Phosphothreonine. The chain crosses the membrane as a helical span at residues 122-144; the sequence is WALLYHALVFLIVLGCLILAVLT. The Extracellular portion of the chain corresponds to 145-154; that stretch reads TFKEYETVSG. The helical transmembrane segment at 155–176 threads the bilayer; sequence DWLLLLETFAIFIFGAEFALRI. The Cytoplasmic portion of the chain corresponds to 177 to 194; it reads WAAGCCCRYKGWRGRLKF. The helical transmembrane segment at 195–214 threads the bilayer; the sequence is ARKPLCMLDIFVLIASVPVV. At 215–226 the chain is on the extracellular side; sequence AVGNQGNVLATS. Residues 227-245 form a helical; Voltage-sensor membrane-spanning segment; it reads LRSLRFLQILRMLRMDRRG. R244 is a binding site for a 1,2-diacyl-sn-glycero-3-phospho-(1D-myo-inositol-4,5-bisphosphate). Residues 246 to 257 are Cytoplasmic-facing; sequence GTWKLLGSAICA. A helical transmembrane segment spans residues 258–283; sequence HSKELITAWYIGFLTLILSSFLVYLV. K260 provides a ligand contact to a 1,2-diacyl-sn-glycero-3-phospho-(1D-myo-inositol-4,5-bisphosphate). Over 284-303 the chain is Extracellular; that stretch reads EKDVPEMDAQGEEMKEEFET. An intramembrane region (pore-forming) is located at residues 304-316; sequence YADALWWGLITLA. The Selectivity filter motif lies at 317 to 322; sequence TIGYGD. Residues 317–327 lie on the Extracellular side of the membrane; that stretch reads TIGYGDKTPKT. Residues 328-354 form a helical membrane-spanning segment; the sequence is WEGRLIAATFSLIGVSFFALPAGILGS. Over 355-873 the chain is Cytoplasmic; it reads GLALKVQEQH…SIWTPSNKPT (519 aa). Positions 357–538 are mediates interaction with calmodulin; sequence ALKVQEQHRQ…RLYKKKFKET (182 aa). K367 lines the a 1,2-diacyl-sn-glycero-3-phospho-(1D-myo-inositol-4,5-bisphosphate) pocket. 3 disordered regions span residues 575–603, 723–742, and 766–873; these read PGPPSTPKHKKSQKGSAFTYPSQQSPRNE, RGGPSSTKAQANLPSSGSTY, and ELQG…NKPT. 3 stretches are compositionally biased toward polar residues: residues 588 to 601, 725 to 741, and 844 to 873; these read KGSAFTYPSQQSPR, GPSSTKAQANLPSSGST, and DPFTPSGSMPMSSTGDGISDSIWTPSNKPT.

Belongs to the potassium channel family. KQT (TC 1.A.1.15) subfamily. Kv7.3/KCNQ3 sub-subfamily. Heterotetramer with KCNQ2; forms heterotetrameric native M-channel responsible for the M-current. Interacts with calmodulin; the interaction is calcium-independent, constitutive and participates in the proper assembly of a functional M-channel. Heteromultimer with KCNQ5. May associate with KCNE2. Interacts with IQCJ-SCHIP1. Interacts (via the pore module) with SLC5A3/SMIT1; forms a coregulatory complex that alters ion selectivity, voltage dependence and gating kinetics of the channel. Post-translationally, KCNQ2/KCNQ3 are ubiquitinated by NEDD4L. Ubiquitination leads to protein degradation. Degradation induced by NEDD4L is inhibited by USP36. In terms of tissue distribution, expressed in dorsal root ganglion (DRG) neurons.

The protein localises to the cell membrane. The enzyme catalyses K(+)(in) = K(+)(out). The catalysed reaction is Rb(+)(in) = Rb(+)(out). It catalyses the reaction Cs(+)(in) = Cs(+)(out). It carries out the reaction Na(+)(in) = Na(+)(out). With respect to regulation, phosphatidylinositol-4,5-bisphosphate (PIP2) potentiates the activation of KCNQ channels by enhancing the electro-mechanical coupling of the voltage-sensing domain (VSD) and the pore-forming domain (PD). In the closed state of the channel, PIP2 is anchored at the S2-S3 loop; upon channel activation, PIP2 interacts with the S4-S5 linker and is involved in channel gating. Calcium suppresses KCNQ2-KCNQ3 channel currents, with calcium-bound calmodulin inducing a change in channel configuration which leads to the reduction of channel affinity for PIP2 and subsequent current suppression. Pore-forming subunit of the voltage-gated potassium (Kv) M-channel which is responsible for the M-current, a key controller of neuronal excitability. M-channel is composed of pore-forming subunits KCNQ2 and KCNQ3 assembled as heterotetramers. The native M-current has a slowly activating and deactivating potassium conductance which plays a critical role in determining the subthreshold electrical excitability of neurons as well as the responsiveness to synaptic inputs. M-channel is selectively permeable in vitro to other cations besides potassium, in decreasing order of affinity K(+) &gt; Rb(+) &gt; Cs(+) &gt; Na(+). M-channel association with SLC5A3/SMIT1 alters channel ion selectivity, increasing Na(+) and Cs(+) permeation relative to K(+). Suppressed by activation of M1 muscarinic acetylcholine receptors. KCNQ3 also associates with KCNQ5 to form a functional channel in vitro and may also contribute to the M-current in brain. The protein is Potassium voltage-gated channel subfamily KQT member 3 of Mus musculus (Mouse).